The primary structure comprises 663 residues: UvrABC system protein B (663 aa).

The Helicase ATP-binding domain occupies 31–418 (DNIEGGEKAQ…TDTVVEQIIR (388 aa)). ATP is bound at residue 44 to 51 (GATGTGKT). The Beta-hairpin motif lies at 97–120 (YYDYYQPEAYVPSSDTYIEKDSSV). A Helicase C-terminal domain is found at 435 to 601 (QMDDLLGEIN…TIKKEIRDLI (167 aa)). Residues 627–662 (QAEIKALQKQMQEAAELLDFELAAQIRDVILKLKAI) form the UVR domain.

The protein belongs to the UvrB family. Forms a heterotetramer with UvrA during the search for lesions. Interacts with UvrC in an incision complex.

It localises to the cytoplasm. Functionally, the UvrABC repair system catalyzes the recognition and processing of DNA lesions. A damage recognition complex composed of 2 UvrA and 2 UvrB subunits scans DNA for abnormalities. Upon binding of the UvrA(2)B(2) complex to a putative damaged site, the DNA wraps around one UvrB monomer. DNA wrap is dependent on ATP binding by UvrB and probably causes local melting of the DNA helix, facilitating insertion of UvrB beta-hairpin between the DNA strands. Then UvrB probes one DNA strand for the presence of a lesion. If a lesion is found the UvrA subunits dissociate and the UvrB-DNA preincision complex is formed. This complex is subsequently bound by UvrC and the second UvrB is released. If no lesion is found, the DNA wraps around the other UvrB subunit that will check the other stand for damage. The chain is UvrABC system protein B from Streptococcus agalactiae serotype Ia (strain ATCC 27591 / A909 / CDC SS700).